An 89-amino-acid chain; its full sequence is Bacterial microcompartment shell vertex protein GrpN (89 aa).

The BMV domain maps to 1 to 83; it reads MYLGKVIGTV…IDAAVVGIVD (83 aa).

The protein belongs to the CcmL/EutN family. In terms of assembly, homopentamer with a small central pore.

The protein resides in the bacterial microcompartment. Its function is as follows. Probably forms vertices in the bacterial microcompartment (BMC) predicted to be involved in glycyl radical-based 1,2-propanediol metabolism in this organism. The chain is Bacterial microcompartment shell vertex protein GrpN from Rhodospirillum rubrum (strain F11).